A 930-amino-acid polypeptide reads, in one-letter code: RNA-binding protein 10 (930 aa).

2 stretches are compositionally biased toward basic and acidic residues: residues 1-14 (MEYE…DRTG) and 21-45 (RSQD…RSYP). The interval 1–127 (MEYERRGGRG…EDEEEEEEKA (127 aa)) is disordered. Acidic residues predominate over residues 59–70 (DSSEEQSAEDSY). Serine 61 and serine 89 each carry phosphoserine. Basic residues predominate over residues 80–89 (RRRRRRHRHS). A compositionally biased stretch (basic and acidic residues) spans 98–111 (RDGDYRDQDYRTEQ). Residues 112–125 (GEEEEEEDEEEEEE) are compositionally biased toward acidic residues. The RRM 1 domain maps to 129-209 (NIVMLRMLPQ…QKVSMHYSDP (81 aa)). Residues 212-242 (KINEDWLCNKCGVQNFKRREKCFKCGVPKSE) form a RanBP2-type zinc finger. Positions 300–384 (DTIILRNLNP…KTINVEFAKG (85 aa)) constitute an RRM 2 domain. The residue at position 383 (lysine 383) is an N6-acetyllysine. Disordered stretches follow at residues 464–487 (GPGM…EAGA), 503–522 (APGL…TATN), 537–566 (ELQS…QYPV), 620–646 (EQSA…HKTK), and 712–753 (DLPK…EEKL). Positions 507–522 (YQQSAEGSSGQSTATN) are enriched in polar residues. The segment covering 540–562 (SPTQPSSSAFPPATSPTAPEAYS) has biased composition (low complexity). Residues 623-639 (ADGHKDTGASSKEGKEK) are compositionally biased toward basic and acidic residues. 5 positions are modified to phosphoserine: serine 718, serine 723, serine 733, serine 736, and serine 738. The segment covering 743–753 (ERGGPEREEKL) has biased composition (basic and acidic residues). Residues 759–784 (LACLLCRRQFPSKEALIRHQQLSGLH) form a C2H2-type; atypical zinc finger. Phosphoserine is present on residues serine 781, serine 797, and serine 845. The interval 818-861 (AAERREKYGIPEPPEPKRRKYGGISTASVDFEQPTRDGLGSDNI) is disordered. The region spanning 858–904 (SDNIGSRMLQAMGWKEGSGLGRKKQGIVTPIEAQTRVRGSGLGARGS) is the G-patch domain. Position 902 is an omega-N-methylarginine (arginine 902).

As to quaternary structure, associates with the spliceosome. Component of a large chromatin remodeling complex, at least composed of MYSM1, PCAF, RBM10 and KIF11/TRIP5.

Its subcellular location is the nucleus. Functionally, binds to ssRNA containing the consensus sequence 5'-AGGUAA-3'. May be involved in post-transcriptional processing, most probably in mRNA splicing. Binds to RNA homopolymers, with a preference for poly(G) and poly(U) and little for poly(A). May bind to specific miRNA hairpins. The polypeptide is RNA-binding protein 10 (Mus musculus (Mouse)).